A 1466-amino-acid chain; its full sequence is ABC transporter G family member 40 (1466 aa).

The disordered stretch occupies residues 1–21 (MSHRHHAALVASASGRSPSWG). The 274-residue stretch at 176 to 449 (GLIGQFGSSN…FEASGFRCPQ (274 aa)) folds into the ABC transporter 1 domain. 209-216 (GPPSSGKS) serves as a coordination point for ATP. The 214-residue stretch at 527 to 740 (ESLKAVLCRE…SQNAISINEF (214 aa)) folds into the ABC transmembrane type-2 1 domain. The next 6 membrane-spanning stretches (helical) occupy residues 545–565 (FLYI…MTVF), 581–601 (FLGA…SELN), 633–653 (VPVS…VMGF), 664–684 (FLAF…LGAI), 690–710 (IAIS…GFVI), and 776–796 (FWLS…LYIL). Residues 821 to 831 (YTETRNEEHRS) show a composition bias toward basic and acidic residues. Positions 821–851 (YTETRNEEHRSRTSTTTSSIPTSANGEGNRP) are disordered. Residues 833-843 (TSTTTSSIPTS) are compositionally biased toward low complexity. In terms of domain architecture, ABC transporter 2 spans 865 to 1117 (LCFNHLNYYV…KLVEYFETIL (253 aa)). 910 to 917 (GVSGAGKT) provides a ligand contact to ATP. Positions 1190–1404 (IQCVANLWKQ…TIYGVIASQF (215 aa)) constitute an ABC transmembrane type-2 2 domain. 7 consecutive transmembrane segments (helical) span residues 1209-1229 (YNSL…TVFW), 1241-1261 (LYNL…TNCM), 1297-1317 (FIYN…MIGY), 1327-1347 (FLFF…MLVA), 1355-1375 (ANIL…FLIF), 1396-1416 (IYGV…VPGG), and 1435-1455 (FLGY…LIFG).

This sequence belongs to the ABC transporter superfamily. ABCG family. PDR (TC 3.A.1.205) subfamily.

Its subcellular location is the membrane. In Oryza sativa subsp. japonica (Rice), this protein is ABC transporter G family member 40.